Consider the following 286-residue polypeptide: tRNA (guanine-N(7)-)-methyltransferase (286 aa).

S-adenosyl-L-methionine-binding residues include glutamate 91, glutamate 116, asparagine 143, and aspartate 165. Residue aspartate 165 is part of the active site. Substrate contacts are provided by residues lysine 169, aspartate 201, and threonine 262 to glutamate 265.

Belongs to the class I-like SAM-binding methyltransferase superfamily. TrmB family.

It catalyses the reaction guanosine(46) in tRNA + S-adenosyl-L-methionine = N(7)-methylguanosine(46) in tRNA + S-adenosyl-L-homocysteine. It functions in the pathway tRNA modification; N(7)-methylguanine-tRNA biosynthesis. Functionally, catalyzes the formation of N(7)-methylguanine at position 46 (m7G46) in tRNA. The chain is tRNA (guanine-N(7)-)-methyltransferase from Bifidobacterium longum subsp. infantis (strain ATCC 15697 / DSM 20088 / JCM 1222 / NCTC 11817 / S12).